The primary structure comprises 477 residues: MNSPALPLSRGLRIRAELKELLTLAAPIMIAQLATTAMGFVDAVMAGRASPHDLAAVALGNSIWIPMFLLMTGTLLATTAKVAQRHGAGDQPGTGPLVRQALWLALLIGPLSGAVLWWLSEPILGLMKVRPELIGPSLLYLKGIALGFPAAALYHVLRCYTNGLGRTRPSMVLGIGGLLLNIPINYALIYGHFGMPKMGGPGCGWATGSVMWFMFLGMLFWVNKASIYRASQLFSRWEWPDRATIGPLVAVGLPIGIAVFAESSIFSVIALLIGGLDENVVAGHQIALNFSALVFMIPYSLGMAVTVRVGHNLGAGLPRDARFAAGVGMAAALGYACVSASLMLLLREQIAAMYSPDPAVIAIAASLIVFSALFQFSDALQVTAAGALRGYQDTRVTMIMTLFAYWGIGLPVGYSLGLTDWFQEPTGPRGLWQGLVVGLTGAAIMLCIRLARSARRFIRQHERLQREDAEAASVLGR.

The next 12 helical transmembrane spans lie at 21 to 41 (LLTL…MGFV), 56 to 76 (AVAL…GTLL), 104 to 124 (LALL…EPIL), 133 to 153 (LIGP…AAAL), 171 to 191 (MVLG…LIYG), 202 to 222 (GCGW…LFWV), 253 to 273 (LPIG…ALLI), 286 to 306 (IALN…MAVT), 326 to 346 (GVGM…MLLL), 360 to 380 (VIAI…SDAL), 398 to 418 (MIMT…SLGL), and 431 to 451 (LWQG…IRLA).

The protein belongs to the multi antimicrobial extrusion (MATE) (TC 2.A.66.1) family.

Its subcellular location is the cell inner membrane. Multidrug efflux pump that functions as an H(+)/drug antiporter. Confers resistance to benzalkonium chloride, fluoroquinolones, ethidium bromide, acriflavine and tetraphenylphosphonium chloride. The polypeptide is Multidrug resistance protein PmpM (pmpM) (Pseudomonas aeruginosa (strain ATCC 15692 / DSM 22644 / CIP 104116 / JCM 14847 / LMG 12228 / 1C / PRS 101 / PAO1)).